The primary structure comprises 425 residues: Probable mitochondrial import inner membrane translocase subunit tin-44 (425 aa).

Positions 38-149 (FLNNLIDNVR…EHVEKVAEKV (112 aa)) form a coiled coil.

This sequence belongs to the Tim44 family. In terms of assembly, probable component of the PAM complex at least composed of a mitochondrial HSP70 protein, GrpE, tin-44, tim-16 and tim-14/dnj-21. The complex interacts with the tim-23 component of the TIM23 complex.

It is found in the mitochondrion inner membrane. Functionally, essential component of the PAM complex, a complex required for the translocation of transit peptide-containing proteins from the inner membrane into the mitochondrial matrix in an ATP-dependent manner. Recruits mitochondrial HSP70 to drive protein translocation into the matrix using ATP as an energy source. This is Probable mitochondrial import inner membrane translocase subunit tin-44 from Caenorhabditis elegans.